A 112-amino-acid chain; its full sequence is Large ribosomal subunit protein eL36y (112 aa).

The segment covering 79–88 (KLGTHKRAKR) has biased composition (basic residues). Residues 79–112 (KLGTHKRAKRKREEMSSVLRKMRSGGGGATEKKK) form a disordered region. Gly residues predominate over residues 102–112 (SGGGGATEKKK).

This sequence belongs to the eukaryotic ribosomal protein eL36 family.

This Arabidopsis thaliana (Mouse-ear cress) protein is Large ribosomal subunit protein eL36y (RPL36B).